We begin with the raw amino-acid sequence, 120 residues long: Holo-[acyl-carrier-protein] synthase (120 aa).

2 residues coordinate Mg(2+): Asp-8 and Glu-60.

It belongs to the P-Pant transferase superfamily. AcpS family. It depends on Mg(2+) as a cofactor.

Its subcellular location is the cytoplasm. The enzyme catalyses apo-[ACP] + CoA = holo-[ACP] + adenosine 3',5'-bisphosphate + H(+). Its function is as follows. Transfers the 4'-phosphopantetheine moiety from coenzyme A to a Ser of acyl-carrier-protein. The chain is Holo-[acyl-carrier-protein] synthase from Anaplasma marginale (strain St. Maries).